The following is a 358-amino-acid chain: Trans-enoyl reductase milB (358 aa).

NADP(+) contacts are provided by residues 48-51 (VDTK), 170-173 (ATAT), 193-196 (SAKH), Tyr211, 258-259 (LD), and 349-350 (VR).

The protein belongs to the zinc-containing alcohol dehydrogenase family. As to quaternary structure, monomer.

It catalyses the reaction 10 malonyl-CoA + acetyl-CoA + 3 AH2 + 8 NADPH + 18 H(+) = cordypyrone A + 3 A + 10 CO2 + 8 NADP(+) + 11 CoA + 8 H2O. The protein operates within secondary metabolite biosynthesis. Functionally, trans-enoyl reductase; part of the gene cluster that mediates the biosynthesis of cordypyrones A and B, 2 pyrones that show modest activities against pathogenic bacteria including methicillin-resistant Staphylococcus aureus (MRSA), Mycobacterium tuberculosis and Bacillus cereus. The HR-PKS milA catalyzes the formation of cordypyrones A via condensation of one acetate with 10 malonate units. Since milA lacks an enoyl reductase domain, the 2 beta-keto processing domains DH and KR of milA collaborate with the trans-enoyl reductase milB to catalyze the different levels of reduction. The cytochrome P450 monooxygenase milC then hydroxylates the C-22 of cordypyrones A to yield cordypyrones B. The sequence is that of Trans-enoyl reductase milB from Cordyceps militaris (strain CM01) (Caterpillar fungus).